Here is a 120-residue protein sequence, read N- to C-terminus: Immunoglobulin kappa variable 2-29 (120 aa).

Residues 1–20 (MRLPAQLLGLLMLWIPGSSA) form the signal peptide. Residues 21–43 (DIVMTQTPLSLSVTPGQPASISC) are framework-1. The region spanning 21–120 (DIVMTQTPLS…YYCMQGIHLP (100 aa)) is the Ig-like domain. An intrachain disulfide couples cysteine 43 to cysteine 113. Residues 44 to 59 (KSSQSLLHSDGKTYLY) form a complementarity-determining-1 region. Residues 60–74 (WYLQKPGQSPQLLIY) form a framework-2 region. Positions 75 to 81 (EVSSRFS) are complementarity-determining-2. The tract at residues 82–113 (GVPDRFSGSGSGTDFTLKISRVEAEDVGVYYC) is framework-3. The tract at residues 114–120 (MQGIHLP) is complementarity-determining-3.

In terms of assembly, immunoglobulins are composed of two identical heavy chains and two identical light chains; disulfide-linked.

Its subcellular location is the secreted. It is found in the cell membrane. V region of the variable domain of immunoglobulin light chains that participates in the antigen recognition. Immunoglobulins, also known as antibodies, are membrane-bound or secreted glycoproteins produced by B lymphocytes. In the recognition phase of humoral immunity, the membrane-bound immunoglobulins serve as receptors which, upon binding of a specific antigen, trigger the clonal expansion and differentiation of B lymphocytes into immunoglobulins-secreting plasma cells. Secreted immunoglobulins mediate the effector phase of humoral immunity, which results in the elimination of bound antigens. The antigen binding site is formed by the variable domain of one heavy chain, together with that of its associated light chain. Thus, each immunoglobulin has two antigen binding sites with remarkable affinity for a particular antigen. The variable domains are assembled by a process called V-(D)-J rearrangement and can then be subjected to somatic hypermutations which, after exposure to antigen and selection, allow affinity maturation for a particular antigen. This Homo sapiens (Human) protein is Immunoglobulin kappa variable 2-29.